The following is a 249-amino-acid chain: Microvitellogenin (249 aa).

An N-terminal signal peptide occupies residues 1 to 17; the sequence is MLRTTVVLLTLAAIAFA.

In terms of biological role, small vitellogenic protein found in females. It is synthesized in the fat body, secreted into the hemolymph, and taken up by developing oocytes. This Manduca sexta (Tobacco hawkmoth) protein is Microvitellogenin (MVG).